Here is an 86-residue protein sequence, read N- to C-terminus: Insulin-related peptide 2 (86 aa).

The first 19 residues, 1–19 (MKFYIVFALILACAACVSS), serve as a signal peptide directing secretion. Positions 20-43 (QEGTNFYCGRQLSRTLALVCWGAE) are excised as a propeptide. R63 carries the arginine amide modification. Positions 67–86 (GPVDECCLKPCSIEEMLTYC) are excised as a propeptide.

This sequence belongs to the insulin family. In terms of tissue distribution, DAGWWVPPQSARALGGGR-amide: Expressed in corpora cardiaca (CC), corpora allata (CA), antennal lobe (AL) and gnathal ganglion (GNG) (at protein level). Expression in CC and CA detected in most animals, in AL in some animals and in GNG in few animals (at protein level).

It is found in the secreted. The sequence is that of Insulin-related peptide 2 from Agrotis ipsilon (Black cutworm moth).